A 382-amino-acid polypeptide reads, in one-letter code: Mannitol-1-phosphate 5-dehydrogenase (382 aa).

3–14 serves as a coordination point for NAD(+); that stretch reads ALHFGAGNIGRG. At Lys269 the chain carries N6-acetyllysine.

This sequence belongs to the mannitol dehydrogenase family.

It carries out the reaction D-mannitol 1-phosphate + NAD(+) = beta-D-fructose 6-phosphate + NADH + H(+). The polypeptide is Mannitol-1-phosphate 5-dehydrogenase (Escherichia coli (strain K12 / MC4100 / BW2952)).